An 827-amino-acid polypeptide reads, in one-letter code: SID1 transmembrane family member 1 (827 aa).

The signal sequence occupies residues 1-19 (MLDCLRLALLCALPWLLRA). Residues 20–309 (AVPGHQEEPL…SIKESVYVKS (290 aa)) lie on the Extracellular side of the membrane. N-linked (GlcNAc...) asparagine glycosylation is found at asparagine 67, asparagine 83, asparagine 136, and asparagine 282. Residues 310 to 330 (SLFSIFVFLSFYLGCLLVVLV) traverse the membrane as a helical segment. Topologically, residues 331-442 (HHVRFQRKSI…DRRIVSKKYK (112 aa)) are cytoplasmic. A disordered region spans residues 344 to 409 (FGSSDGSGNM…VEESDFDTMP (66 aa)). The segment covering 375-386 (SSSSPGRQMSSS) has biased composition (low complexity). A compositionally biased stretch (acidic residues) spans 398–409 (SSVEESDFDTMP). Residues 443-463 (IYFWNIITIAVFYALPVMQLV) traverse the membrane as a helical segment. The Extracellular segment spans residues 464-494 (ITYQTVVNVTGNQDICYYNFLCAHPLGVLSA). Asparagine 471 carries an N-linked (GlcNAc...) asparagine glycan. Residues 495–515 (FNNILSNLGHVLLGFLFLLIV) traverse the membrane as a helical segment. The Cytoplasmic portion of the chain corresponds to 516–541 (LRRDLLHRRALEAKDIFAMEYGIPKH). A helical transmembrane segment spans residues 542 to 562 (FGLFYAMGIALMMEGVLSACY). Residues 563 to 572 (HVCPNYSNFQ) lie on the Extracellular side of the membrane. Residue asparagine 567 is glycosylated (N-linked (GlcNAc...) asparagine). Residues 573-590 (FDTSFMYMIAGLCMLKLY) traverse the membrane as a helical segment. Residues 591 to 600 (QTRHPDINAS) lie on the Cytoplasmic side of the membrane. Residues 601–621 (AYSAYASFAVVITLTVLGVVF) form a helical membrane-spanning segment. The Extracellular portion of the chain corresponds to 622 to 626 (GKNDV). The chain crosses the membrane as a helical span at residues 627–647 (WFWIIFSAIHILSSLALSTQI). The Cytoplasmic portion of the chain corresponds to 648 to 683 (YYMGRFKIDLGIFRRAAMVFYTDCIQQCSRPLYMDR). Residues 684–704 (MVLLIVGNLVNWSFAFFGLIY) form a helical membrane-spanning segment. The Extracellular segment spans residues 705–710 (RPRDFA). Residues 711-731 (SYMLGIFICNLLLYLAFYIIM) traverse the membrane as a helical segment. Over 732 to 741 (KLRSSEKVLP) the chain is Cytoplasmic. A helical transmembrane segment spans residues 742-762 (LPVFCIAATAVVWAAALYFFF). Residues 763 to 791 (QNLSSWEGTPAESREKNRECVLLDFFDDH) lie on the Extracellular side of the membrane. The N-linked (GlcNAc...) asparagine glycan is linked to asparagine 764. A helical membrane pass occupies residues 792 to 812 (DIWHFLSATALFFSFLVLLTL). Over 813 to 827 (DDDLDVVRRDQIPVF) the chain is Cytoplasmic.

This sequence belongs to the SID1 family.

It localises to the membrane. In terms of biological role, in vitro binds long double-stranded RNA (dsRNA) (500 and 700 base pairs), but not dsRNA shorter than 300 bp. Not involved in RNA autophagy, a process in which RNA is directly imported into lysosomes in an ATP-dependent manner, and degraded. The polypeptide is SID1 transmembrane family member 1 (Sidt1) (Mus musculus (Mouse)).